A 159-amino-acid polypeptide reads, in one-letter code: MSKKLYLIIRIKGEPDAHPDVRKTLENLRLLRRYAAVVYPADLPGLEGMLRKAQAWITWGEIRKDVLAKLLEVRGRAPGDKKLTPEYIKEKFGVNSFEELAEKIINGEVVLHKQEAIKPFFRLHPPRGGFKKSIKKPYRSGGEAGYRGEAINELVLRML.

It belongs to the universal ribosomal protein uL30 family. As to quaternary structure, part of the 50S ribosomal subunit.

The protein is Large ribosomal subunit protein uL30 of Ignicoccus hospitalis (strain KIN4/I / DSM 18386 / JCM 14125).